An 83-amino-acid chain; its full sequence is MKTLLLTMVVVTIVCLDLGYTLKCHNTQLPFIYKTCPEGKNLCFKATLKKFPLKFPVKRGCADNCPKNSALLKYVCCSSDKCN.

The first 21 residues, 1 to 21 (MKTLLLTMVVVTIVCLDLGYT), serve as a signal peptide directing secretion. Intrachain disulfides connect Cys-24-Cys-43, Cys-36-Cys-61, Cys-65-Cys-76, and Cys-77-Cys-82.

Belongs to the three-finger toxin family. Short-chain subfamily. Orphan group XV sub-subfamily. As to expression, expressed by the venom gland.

The protein localises to the secreted. Its subcellular location is the target cell membrane. Has low cytotoxic activity. This Naja atra (Chinese cobra) protein is Cytotoxin homolog 5.